We begin with the raw amino-acid sequence, 419 residues long: UDP-N-acetylglucosamine 1-carboxyvinyltransferase (419 aa).

Residue 22–23 participates in phosphoenolpyruvate binding; the sequence is KN. Arg-92 is a UDP-N-acetyl-alpha-D-glucosamine binding site. Cys-116 functions as the Proton donor in the catalytic mechanism. The residue at position 116 (Cys-116) is a 2-(S-cysteinyl)pyruvic acid O-phosphothioketal. Asp-306 and Ile-328 together coordinate UDP-N-acetyl-alpha-D-glucosamine.

It belongs to the EPSP synthase family. MurA subfamily.

Its subcellular location is the cytoplasm. The catalysed reaction is phosphoenolpyruvate + UDP-N-acetyl-alpha-D-glucosamine = UDP-N-acetyl-3-O-(1-carboxyvinyl)-alpha-D-glucosamine + phosphate. The protein operates within cell wall biogenesis; peptidoglycan biosynthesis. In terms of biological role, cell wall formation. Adds enolpyruvyl to UDP-N-acetylglucosamine. The chain is UDP-N-acetylglucosamine 1-carboxyvinyltransferase from Pseudoalteromonas translucida (strain TAC 125).